The primary structure comprises 480 residues: Immune evasion protein OPG047 (480 aa).

Positions 10 to 90 (CKNILALSMT…SYTGKVYIDS (81 aa)) constitute a BTB domain. Positions 125 to 223 (CVECYMMGIE…NYLSPRGINN (99 aa)) constitute a BACK domain. Kelch repeat units follow at residues 273 to 319 (VVYL…PANN), 320 to 363 (KLYV…SINN), 365 to 408 (IYVM…VFGR), 410 to 447 (LFLVGRNAEFYCESSNTWTLIDDPIYPRDNPELIIVDN), and 448 to 480 (KLLLIGGFYRESYIDTIEVYNHHTYSWNIWDGK).

The protein belongs to the orthopoxvirus OPG047 family.

In terms of biological role, might have a role in the suppression of host immune response. The sequence is that of Immune evasion protein OPG047 (OPG047) from Vaccinia virus (strain Western Reserve) (VACV).